Consider the following 137-residue polypeptide: Leaf-specific thionin DB4 (137 aa).

The N-terminal stretch at 1–28 (MAPSKSIKSVVICVLILGLVLEQVQVEG) is a signal peptide. 4 disulfides stabilise this stretch: Cys-31-Cys-68, Cys-32-Cys-60, Cys-40-Cys-58, and Cys-44-Cys-54. A propeptide spans 75–137 (LNLLPESGEP…DGAVIQSVEA (63 aa)) (acidic domain).

It belongs to the plant thionin (TC 1.C.44) family. 4 C-C subfamily.

It localises to the secreted. Functionally, thionins are small plant proteins which are toxic to animal cells. They seem to exert their toxic effect at the level of the cell membrane. Their precise function is not known. The chain is Leaf-specific thionin DB4 (THI1.3) from Hordeum vulgare (Barley).